A 247-amino-acid chain; its full sequence is Dof zinc finger protein DOF3.5 (247 aa).

The Dof-type zinc-finger motif lies at 25–79 (PSCPRCGSSNTKFCYYNNYSLTQPRYFCKGCRRYWTKGGSLRNVPVGGGCRKSRR). Residues cysteine 27, cysteine 30, cysteine 52, and cysteine 55 each contribute to the Zn(2+) site. The interval 70–100 (VGGGCRKSRRPKSSSGNNTKTSLTANSGNPG) is disordered. The span at 82–94 (SSSGNNTKTSLTA) shows a compositional bias: polar residues.

The protein resides in the nucleus. Its function is as follows. Transcription factor that binds specifically to a 5'-AA[AG]G-3' consensus core sequence. This is Dof zinc finger protein DOF3.5 (DOF3.5) from Arabidopsis thaliana (Mouse-ear cress).